Here is a 495-residue protein sequence, read N- to C-terminus: Lysine--tRNA ligase (495 aa).

Mg(2+) contacts are provided by glutamate 406 and glutamate 413.

It belongs to the class-II aminoacyl-tRNA synthetase family. In terms of assembly, homodimer. The cofactor is Mg(2+).

The protein localises to the cytoplasm. It carries out the reaction tRNA(Lys) + L-lysine + ATP = L-lysyl-tRNA(Lys) + AMP + diphosphate. The protein is Lysine--tRNA ligase of Leuconostoc mesenteroides subsp. mesenteroides (strain ATCC 8293 / DSM 20343 / BCRC 11652 / CCM 1803 / JCM 6124 / NCDO 523 / NBRC 100496 / NCIMB 8023 / NCTC 12954 / NRRL B-1118 / 37Y).